The chain runs to 391 residues: Succinate--CoA ligase [GDP-forming] subunit beta, mitochondrial (391 aa).

The region spanning 5–233 is the ATP-grasp domain; that stretch reads KKIMADHGVT…NAEFRQKEIF (229 aa). GTP-binding positions include Gln16, 49–51, and Leu105; that span reads GRG. Mg(2+)-binding residues include Asn202 and Asp216. Residues Asn267 and 324–326 each bind substrate; that span reads GIV.

Belongs to the succinate/malate CoA ligase beta subunit family. GTP-specific subunit beta subfamily. As to quaternary structure, heterodimer of an alpha and a beta subunit. The beta subunit determines specificity for GTP. Requires Mg(2+) as cofactor. In terms of tissue distribution, widely expressed. Not present in breast muscle.

The protein localises to the mitochondrion. The catalysed reaction is GTP + succinate + CoA = succinyl-CoA + GDP + phosphate. It participates in carbohydrate metabolism; tricarboxylic acid cycle; succinate from succinyl-CoA (ligase route): step 1/1. In terms of biological role, GTP-specific succinyl-CoA synthetase functions in the citric acid cycle (TCA), coupling the hydrolysis of succinyl-CoA to the synthesis of GTP and thus represents the only step of substrate-level phosphorylation in the TCA. The beta subunit provides nucleotide specificity of the enzyme and binds the substrate succinate, while the binding sites for coenzyme A and phosphate are found in the alpha subunit. The polypeptide is Succinate--CoA ligase [GDP-forming] subunit beta, mitochondrial (Columba livia (Rock dove)).